The sequence spans 178 residues: Large ribosomal subunit protein uL6 (178 aa).

The protein belongs to the universal ribosomal protein uL6 family. Part of the 50S ribosomal subunit.

Functionally, this protein binds to the 23S rRNA, and is important in its secondary structure. It is located near the subunit interface in the base of the L7/L12 stalk, and near the tRNA binding site of the peptidyltransferase center. This is Large ribosomal subunit protein uL6 from Francisella tularensis subsp. mediasiatica (strain FSC147).